Consider the following 526-residue polypeptide: Cholesterol side-chain cleavage enzyme, mitochondrial (526 aa).

The N-terminal 36 residues, 1-36 (MLAKGLSLRSVLVKGCQPFLSPTWQGPVLSTGKGAG), are a transit peptide targeting the mitochondrion. Residues 30–41 (STGKGAGTSTSS) are compositionally biased toward low complexity. A disordered region spans residues 30–49 (STGKGAGTSTSSPRSFNEIP). C458 lines the heme pocket.

This sequence belongs to the cytochrome P450 family. As to quaternary structure, interacts with FDX1/adrenodoxin. It depends on heme as a cofactor.

The protein resides in the mitochondrion inner membrane. The enzyme catalyses 6 reduced [adrenodoxin] + cholesterol + 3 O2 + 6 H(+) = 4-methylpentanal + pregnenolone + 6 oxidized [adrenodoxin] + 4 H2O. It carries out the reaction 2 reduced [adrenodoxin] + cholesterol + O2 + 2 H(+) = (22R)-hydroxycholesterol + 2 oxidized [adrenodoxin] + H2O. The catalysed reaction is (22R)-hydroxycholesterol + 2 reduced [adrenodoxin] + O2 + 2 H(+) = (20R,22R)-20,22-dihydroxycholesterol + 2 oxidized [adrenodoxin] + H2O. It catalyses the reaction (20R,22R)-20,22-dihydroxycholesterol + 2 reduced [adrenodoxin] + O2 + 2 H(+) = 4-methylpentanal + pregnenolone + 2 oxidized [adrenodoxin] + 2 H2O. The protein operates within lipid metabolism; C21-steroid hormone metabolism. It participates in steroid metabolism; cholesterol metabolism. Functionally, a cytochrome P450 monooxygenase that catalyzes the side-chain hydroxylation and cleavage of cholesterol to pregnenolone, the precursor of most steroid hormones. Catalyzes three sequential oxidation reactions of cholesterol, namely the hydroxylation at C22 followed with the hydroxylation at C20 to yield 20R,22R-hydroxycholesterol that is further cleaved between C20 and C22 to yield the C21-steroid pregnenolone and 4-methylpentanal. Mechanistically, uses molecular oxygen inserting one oxygen atom into a substrate and reducing the second into a water molecule. Two electrons are provided by NADPH via a two-protein mitochondrial transfer system comprising flavoprotein FDXR (adrenodoxin/ferredoxin reductase) and nonheme iron-sulfur protein FDX1 or FDX2 (adrenodoxin/ferredoxin). This is Cholesterol side-chain cleavage enzyme, mitochondrial from Mus musculus (Mouse).